We begin with the raw amino-acid sequence, 579 residues long: Lens epithelium-derived growth factor (579 aa).

Residues 1–64 (MSRDFKPGDL…PKDIFPYSEN (64 aa)) form the PWWP domain. Disordered stretches follow at residues 62 to 81 (SENKDKYGKPNKRKGFNEGL), 88 to 203 (PKVK…EEAA), 215 to 397 (AAPV…SMDS), and 492 to 579 (AEQK…FENK). Over residues 94–107 (HQPSHPAVNTSIKE) the composition is skewed to polar residues. The span at 153 to 173 (KEMHSTKEDEEPSEKNSKEGV) shows a compositional bias: basic and acidic residues. A compositionally biased stretch (basic residues) spans 184–193 (VARRGRKRKA). The Nuclear localization signal signature appears at 186 to 196 (RRGRKRKAEKQ). The span at 215-224 (AAPVTVSPKV) shows a compositional bias: low complexity. Residues 261-308 (EEEKAKKKGPDEKPKKQGKKDEEGQKEEEKPKKEYDKKDGKKEAEPKR) are compositionally biased toward basic and acidic residues. The span at 321-330 (DSEDEGGEEE) shows a compositional bias: acidic residues. Residues 334 to 349 (KKKGGRSFQSTHRRNI) are compositionally biased toward basic residues. Residues 347 to 442 (RNIMRGQHEK…SMQQAQKHTE (96 aa)) are a coiled coil. Basic and acidic residues-rich tracts occupy residues 352 to 397 (GQHE…SMDS) and 492 to 522 (AEQKQHEEANKTKEQWKKGTNKKNEKEKDQT). Positions 387-464 (MEKKRETSMD…VSQVIMEKST (78 aa)) are integrase-binding domain (IBD). The span at 530 to 543 (GSETQDTNQSQHNG) shows a compositional bias: polar residues. A compositionally biased stretch (basic and acidic residues) spans 544–579 (ENAEEKDKLEVASKKKTCGEESELEKPAKESAFENK).

This sequence belongs to the HDGF family.

The protein resides in the nucleus. In terms of biological role, transcriptional coactivator involved in neuroepithelial stem cell differentiation and neurogenesis. Involved in particular in lens epithelial cell gene regulation and stress responses. May play an important role in lens epithelial to fiber cell terminal differentiation. May play a protective role during stress-induced apoptosis. This Gallus gallus (Chicken) protein is Lens epithelium-derived growth factor (PSIP1).